A 423-amino-acid chain; its full sequence is Histidine--tRNA ligase (423 aa).

This sequence belongs to the class-II aminoacyl-tRNA synthetase family. As to quaternary structure, homodimer.

The protein localises to the cytoplasm. The catalysed reaction is tRNA(His) + L-histidine + ATP = L-histidyl-tRNA(His) + AMP + diphosphate + H(+). The sequence is that of Histidine--tRNA ligase from Halorhodospira halophila (strain DSM 244 / SL1) (Ectothiorhodospira halophila (strain DSM 244 / SL1)).